We begin with the raw amino-acid sequence, 880 residues long: MTLLTSSLLLFSLLTSRLEAIPVLEKSPAHPAHSAHTAHPAHPSPGVRILRAPESLVAPLGDEVVLECETSLQPERFEWSHRSSRSPGAGFKYLRTGTAKANVSQEAAISRLRVLVRPDTLGEYRCVGWFGPLVVTSTTARLELASTSLVDAQESEAPLQWRVSAGNSVLWSCGQQVQSNPSASWSYFRNGVEIKPEFIGTNGNLFLSNVSSESSGIYSCQATNPASGERIQLPGSMQLQVTPEQRSQSKSPHLLKGQPSSQEITIREGSSLLLQCPGVGSPPPTVVWSSPDVVGAVKNKRSKVFGHALEISNTRVHDAGTYICFQDNGVRPALEHYIKVHVEQPPQIVRPPWADLTNEGDRLKLECEATGVPTPEIYWLLNGHSSVDDTEAELSNNFLILHSVLKRHAGYVQCFARNRLGEHSAGTLLQVNPKQIQEPRESGGTHRPKPNQGSKQKQMYPPTPPNVTRLSDESVMLRWMVPRNGGLPIVIFKVQYRMVGKRKNWQTTNDNIPYGKPKWNSELGKSFTASVTDLKPEHTYRFRILAVYSNNDNKESNTSAKFYLQPGAALDPMPVPELLEIEEYSETAVVLHWSLASDADEHLITGYYAYYRPSSSAGEYFKATIEGAHARSFKIAPLETATMYEFKLQSFSAVSASEFSALKQGRTQRPKTSTTEEPTLQMGDRDTTTPSHNETFNMSPMLTGTIGGGAVLILLLISTCLCVCRRRTSRSRGNNPNKPRMAELRDDFVPLGNCSPTKQRQRTRHIHITLNPLAQQQQQALEEKNDTDQDAPYYQRPSSYDYDPTLRRMSSSSLRRSQRTLERAGGSNGSNNGNNNNLNQSAEAGAVENPGKPGRVLMKRPRLSSRSENLSSGSLNSVGV.

The signal sequence occupies residues 1-20 (MTLLTSSLLLFSLLTSRLEA). At 21–703 (IPVLEKSPAH…ETFNMSPMLT (683 aa)) the chain is on the extracellular side. Ig-like C2-type domains lie at 45–142 (PGVR…TARL), 132–232 (PLVV…ERIQ), 252–340 (PHLL…YIKV), and 346–432 (PQIV…LQVN). 4 disulfides stabilise this stretch: Cys68-Cys126, Cys173-Cys220, Cys276-Cys324, and Cys367-Cys414. N-linked (GlcNAc...) asparagine glycosylation is found at Asn102 and Asn209. The segment at 426-467 (GTLLQVNPKQIQEPRESGGTHRPKPNQGSKQKQMYPPTPPNV) is disordered. Fibronectin type-III domains follow at residues 461 to 567 (PPTP…LQPG) and 575 to 670 (VPEL…TQRP). N-linked (GlcNAc...) asparagine glycosylation occurs at Asn466. Residues Arg497, Lys501, Lys503, and Arg541 each coordinate heparin. Asn557 carries N-linked (GlcNAc...) asparagine glycosylation. Residues 662–697 (LKQGRTQRPKTSTTEEPTLQMGDRDTTTPSHNETFN) are disordered. Composition is skewed to polar residues over residues 665–678 (GRTQ…TEEP) and 688–697 (TTPSHNETFN). A glycan (N-linked (GlcNAc...) asparagine) is linked at Asn693. Residues 704–724 (GTIGGGAVLILLLISTCLCVC) form a helical membrane-spanning segment. Residues 725 to 880 (RRRTSRSRGN…SSGSLNSVGV (156 aa)) are Cytoplasmic-facing. 2 disordered regions span residues 728-762 (TSRS…QRQR) and 775-880 (QQQQ…SVGV). Low complexity-rich tracts occupy residues 823–837 (RAGG…NNNN) and 864–880 (SSRS…SVGV).

It belongs to the immunoglobulin superfamily. IHOG family. Homodimer. Heterotetramer; 2 iHog chains bind 2 hh chains when facilitated by heparin, heparin is required to promote high-affinity interactions between hh and iHog.

The protein localises to the membrane. Its function is as follows. Mediates response to the active Hedgehog (Hh) protein signal in embryos, functioning upstream or at the level of patched (ptc). This Drosophila sechellia (Fruit fly) protein is Interference hedgehog.